A 275-amino-acid chain; its full sequence is Release factor glutamine methyltransferase (275 aa).

S-adenosyl-L-methionine contacts are provided by residues 117-121, Asp140, Trp168, and Asn182; that span reads GTGSG. Substrate is bound at residue 182-185; it reads NPPY.

The protein belongs to the protein N5-glutamine methyltransferase family. PrmC subfamily.

It catalyses the reaction L-glutaminyl-[peptide chain release factor] + S-adenosyl-L-methionine = N(5)-methyl-L-glutaminyl-[peptide chain release factor] + S-adenosyl-L-homocysteine + H(+). Methylates the class 1 translation termination release factors RF1/PrfA and RF2/PrfB on the glutamine residue of the universally conserved GGQ motif. The chain is Release factor glutamine methyltransferase from Buchnera aphidicola subsp. Schizaphis graminum (strain Sg).